A 361-amino-acid polypeptide reads, in one-letter code: tRNA/tmRNA (uracil-C(5))-methyltransferase (361 aa).

S-adenosyl-L-methionine-binding residues include Q183, Y211, N216, E232, and D294. The active-site Nucleophile is C319. E353 (proton acceptor) is an active-site residue.

This sequence belongs to the class I-like SAM-binding methyltransferase superfamily. RNA M5U methyltransferase family. TrmA subfamily.

It carries out the reaction uridine(54) in tRNA + S-adenosyl-L-methionine = 5-methyluridine(54) in tRNA + S-adenosyl-L-homocysteine + H(+). The catalysed reaction is uridine(341) in tmRNA + S-adenosyl-L-methionine = 5-methyluridine(341) in tmRNA + S-adenosyl-L-homocysteine + H(+). Dual-specificity methyltransferase that catalyzes the formation of 5-methyluridine at position 54 (m5U54) in all tRNAs, and that of position 341 (m5U341) in tmRNA (transfer-mRNA). The chain is tRNA/tmRNA (uracil-C(5))-methyltransferase from Acinetobacter baumannii (strain AB307-0294).